The sequence spans 296 residues: 33 kDa chaperonin (296 aa).

2 disulfide bridges follow: Cys236–Cys238 and Cys269–Cys272.

It belongs to the HSP33 family. In terms of processing, under oxidizing conditions two disulfide bonds are formed involving the reactive cysteines. Under reducing conditions zinc is bound to the reactive cysteines and the protein is inactive.

Its subcellular location is the cytoplasm. In terms of biological role, redox regulated molecular chaperone. Protects both thermally unfolding and oxidatively damaged proteins from irreversible aggregation. Plays an important role in the bacterial defense system toward oxidative stress. This is 33 kDa chaperonin from Lactobacillus helveticus (strain DPC 4571).